The chain runs to 394 residues: Ribulose bisphosphate carboxylase large chain (394 aa).

Position 5 is an N6,N6,N6-trimethyllysine (Lys-5). 2 residues coordinate substrate: Asn-114 and Thr-164. The active-site Proton acceptor is the Lys-166. Residue Lys-168 participates in substrate binding. Positions 192, 194, and 195 each coordinate Mg(2+). Lys-192 carries the N6-carboxylysine modification. Catalysis depends on His-285, which acts as the Proton acceptor. Substrate contacts are provided by Arg-286, His-318, and Ser-370.

Belongs to the RuBisCO large chain family. Type I subfamily. Heterohexadecamer of 8 large chains and 8 small chains; disulfide-linked. The disulfide link is formed within the large subunit homodimers. Requires Mg(2+) as cofactor. Post-translationally, the disulfide bond which can form in the large chain dimeric partners within the hexadecamer appears to be associated with oxidative stress and protein turnover.

It is found in the plastid. The protein localises to the chloroplast. The enzyme catalyses 2 (2R)-3-phosphoglycerate + 2 H(+) = D-ribulose 1,5-bisphosphate + CO2 + H2O. The catalysed reaction is D-ribulose 1,5-bisphosphate + O2 = 2-phosphoglycolate + (2R)-3-phosphoglycerate + 2 H(+). In terms of biological role, ruBisCO catalyzes two reactions: the carboxylation of D-ribulose 1,5-bisphosphate, the primary event in carbon dioxide fixation, as well as the oxidative fragmentation of the pentose substrate in the photorespiration process. Both reactions occur simultaneously and in competition at the same active site. This chain is Ribulose bisphosphate carboxylase large chain (rbcL), found in Nelumbo lutea (American lotus).